A 458-amino-acid chain; its full sequence is Carboxypeptidase N catalytic chain (458 aa).

The signal sequence occupies residues 1–20 (MSDLLSVFLHLLLLFKLVAP). Positions 24–338 (RHHRYDDLVR…EALIQFLEQV (315 aa)) constitute a Peptidase M14 domain. C42 and C104 form a disulfide bridge. 3 residues coordinate Zn(2+): H86, E89, and H216. C271 and C311 are disulfide-bonded. The Proton donor/acceptor role is filled by E308. 3 O-linked (GalNAc...) threonine glycosylation sites follow: T400, T402, and T409. The segment at 423–458 (SPVRRAPSRRHGVRAKVQPQARKKEMEMRQLQRGPA) is disordered.

Belongs to the peptidase M14 family. As to quaternary structure, tetramer of two catalytic chains and two glycosylated inactive chains. Zn(2+) is required as a cofactor. In terms of tissue distribution, synthesized in the liver and secreted in plasma.

The protein localises to the secreted. The protein resides in the extracellular space. It catalyses the reaction Release of a C-terminal basic amino acid, preferentially lysine.. In terms of biological role, protects the body from potent vasoactive and inflammatory peptides containing C-terminal Arg or Lys (such as kinins or anaphylatoxins) which are released into the circulation. This chain is Carboxypeptidase N catalytic chain (CPN1), found in Homo sapiens (Human).